The primary structure comprises 101 residues: Urease subunit beta (101 aa).

It belongs to the urease beta subunit family. As to quaternary structure, heterotrimer of UreA (gamma), UreB (beta) and UreC (alpha) subunits. Three heterotrimers associate to form the active enzyme.

The protein localises to the cytoplasm. The enzyme catalyses urea + 2 H2O + H(+) = hydrogencarbonate + 2 NH4(+). It participates in nitrogen metabolism; urea degradation; CO(2) and NH(3) from urea (urease route): step 1/1. The chain is Urease subunit beta from Ralstonia pickettii (strain 12J).